We begin with the raw amino-acid sequence, 350 residues long: Ion-translocating oxidoreductase complex subunit D (350 aa).

5 helical membrane-spanning segments follow: residues 19–39, 41–61, 67–87, 88–108, and 122–142; these read LMLL…WFFG, GTLI…ALVL, PVKP…IGLS, LPPL…IIIA, and PAMV…TSWL. FMN phosphoryl threonine is present on Thr-186. A run of 4 helical transmembrane segments spans residues 213–233, 242–262, 264–284, and 299–316; these read WGGI…LFLL, IPGA…LMTP, ATAT…AFFI, and LVYG…RRFG.

It belongs to the NqrB/RnfD family. As to quaternary structure, the complex is composed of six subunits: RnfA, RnfB, RnfC, RnfD, RnfE and RnfG. FMN is required as a cofactor.

It is found in the cell inner membrane. In terms of biological role, part of a membrane-bound complex that couples electron transfer with translocation of ions across the membrane. This Aeromonas hydrophila subsp. hydrophila (strain ATCC 7966 / DSM 30187 / BCRC 13018 / CCUG 14551 / JCM 1027 / KCTC 2358 / NCIMB 9240 / NCTC 8049) protein is Ion-translocating oxidoreductase complex subunit D.